A 594-amino-acid chain; its full sequence is MLPAHKHTLETLLTDVVKQVAQATQGESEAAFIAPAITLERPKVAAHGDVACNVAMQLAKPMRANPRQLAQQIVDALLADPLAKGLVDGAEVAGPGFINLRLSAASKQAVIAAVFAQREAFGRSQREAGKRVLVEFVSANPTGPLHVGHGRQAALGDAMSNVLASQGFDVHREFYYNDAGVQIGNLAISTQARARGLKPGDPGWPEAAYNGEYIADIARDYLNGETVSASDGEPVKGAGDVEDLEAIRRFAVAYLRHEQDMDLQAFGVKFDQYYLESSLYKEGRVEKTVNELIAAGKTYEQEGALWLRTTDDGDDKDRVMRKSDGTYTYFVPDVAYHETKWERGFTKVINIQGSDHHGTIARVRAGLQGLGIGIPKGYPDYVLHKMVTVMRDGQEVKISKRAGSYVTVRDLIEWSGGAVPGQEAAPDLLDEETIRRGRDAVRFFLISRKADTEFVFDVDLALKQNDENPVYYVQYAHARICSVINEWKSRYGADETGLPVVDLSPLDSERATALLQKLAEFPDMLTHAAGELAPHAVAFYLRDLAGEFHSFYNAERVLVDDEAQRNARIALLAATRQVLANGLAVIGVSAPAKM.

Positions 139–149 (ANPTGPLHVGH) match the 'HIGH' region motif.

Belongs to the class-I aminoacyl-tRNA synthetase family. In terms of assembly, monomer.

It localises to the cytoplasm. It carries out the reaction tRNA(Arg) + L-arginine + ATP = L-arginyl-tRNA(Arg) + AMP + diphosphate. In Paraburkholderia phymatum (strain DSM 17167 / CIP 108236 / LMG 21445 / STM815) (Burkholderia phymatum), this protein is Arginine--tRNA ligase.